Reading from the N-terminus, the 180-residue chain is Large ribosomal subunit protein uL6 (180 aa).

This sequence belongs to the universal ribosomal protein uL6 family. In terms of assembly, part of the 50S ribosomal subunit.

This protein binds to the 23S rRNA, and is important in its secondary structure. It is located near the subunit interface in the base of the L7/L12 stalk, and near the tRNA binding site of the peptidyltransferase center. This chain is Large ribosomal subunit protein uL6, found in Clostridium botulinum (strain ATCC 19397 / Type A).